We begin with the raw amino-acid sequence, 219 residues long: RNA-3 uncharacterized 24.7 kDa protein (219 aa).

This is RNA-3 uncharacterized 24.7 kDa protein from Beta macrocarpa (Beet).